The chain runs to 423 residues: D-tagatose-1,6-bisphosphate aldolase subunit GatZ (423 aa).

The protein belongs to the GatZ/KbaZ family. GatZ subfamily. Forms a complex with GatY.

Its pathway is carbohydrate metabolism; D-tagatose 6-phosphate degradation; D-glyceraldehyde 3-phosphate and glycerone phosphate from D-tagatose 6-phosphate: step 2/2. Component of the tagatose-1,6-bisphosphate aldolase GatYZ that is required for full activity and stability of the Y subunit. Could have a chaperone-like function for the proper and stable folding of GatY. When expressed alone, GatZ does not show any aldolase activity. Is involved in the catabolism of galactitol. The chain is D-tagatose-1,6-bisphosphate aldolase subunit GatZ from Salmonella heidelberg (strain SL476).